The sequence spans 389 residues: snRNA-activating protein complex subunit 1 (389 aa).

Residues 1–15 (MGTPAGAGTRPTGAG) show a composition bias toward low complexity. Disordered stretches follow at residues 1-22 (MGTPAGAGTRPTGAGTVEGVGI), 245-276 (WHKERKNPSLKPKLKDGEENGEGSSEEPERCE), and 290-389 (SAVV…KRKC). The segment at 20 to 187 (VGIPPGLQTD…QKFKDPNDRV (168 aa)) is SNAPC3-binding. The SNAPC4-binding stretch occupies residues 183–287 (PNDRVMKLIT…AVSLAKIKAK (105 aa)). Basic and acidic residues predominate over residues 245 to 262 (WHKERKNPSLKPKLKDGE). Residues S308 and S309 each carry the phosphoserine modification.

As to quaternary structure, part of the SNAPc complex composed of 5 subunits: SNAPC1, SNAPC2, SNAPC3, SNAPC4 and SNAPC5. SNAPC1 interacts with SNAPC3, SNAPC4 and TBP.

It is found in the nucleus. In terms of biological role, part of the SNAPc complex required for the transcription of both RNA polymerase II and III small-nuclear RNA genes. Binds to the proximal sequence element (PSE), a non-TATA-box basal promoter element common to these 2 types of genes. Recruits TBP and BRF2 to the U6 snRNA TATA box. The sequence is that of snRNA-activating protein complex subunit 1 (Snapc1) from Mus musculus (Mouse).